The chain runs to 137 residues: Large ribosomal subunit protein uL16 (137 aa).

Belongs to the universal ribosomal protein uL16 family. In terms of assembly, part of the 50S ribosomal subunit.

In terms of biological role, binds 23S rRNA and is also seen to make contacts with the A and possibly P site tRNAs. In Spiroplasma kunkelii, this protein is Large ribosomal subunit protein uL16.